Reading from the N-terminus, the 123-residue chain is Methanesulfonate monooxygenase ferredoxin subunit (123 aa).

A Rieske domain is found at Thr-4 to Ala-99. [2Fe-2S] cluster contacts are provided by Cys-43, His-45, Cys-63, and His-66.

It belongs to the bacterial ring-hydroxylating dioxygenase ferredoxin component family. The MSA monooxygenase system consists of 4 proteins: the 2 subunits of the hydroxylase component (MsmA and MsmB), a ferredoxin (MsmC) and a ferredoxin reductase (MsmD). The ferredoxin component is dimeric. It depends on [2Fe-2S] cluster as a cofactor.

Its subcellular location is the cytoplasm. The enzyme catalyses methanesulfonate + NADH + O2 = sulfite + formaldehyde + NAD(+) + H2O. With respect to regulation, MSAMO is inhibited by metal chelators (such as bathophenanthroline, bathocuprione, neocuprione, alpha-alpha-dipyridil and sodium EDTA) and by sodium azide, sodium arsenate and potassium cyanide. In terms of biological role, methanesulfonate monooxygenase (MSAMO) mediates the primary degradation of methanesulfonic acid (MSA) to produce formaldehyd and inorganic sulfite by initial hydroxylation of the carbon atom prior to spontaneous cleavage of the unstable hydroxymethanesulfonic acid. MSAMO has a restricted substrate range that includes only the short-chain aliphatic sulfonates (methane- to butanesulfonate) and excludes all larger molecules, such as arylsulfonates and aromatic sulfonates. All MSAMO components are required for enzyme activity. The chain is Methanesulfonate monooxygenase ferredoxin subunit from Methylosulfonomonas methylovora.